A 496-amino-acid polypeptide reads, in one-letter code: Fibronectin type III and SPRY domain-containing protein 1 (496 aa).

Residues 4 to 99 (QKEALRKIIT…ALESSEELLE (96 aa)) are a coiled coil. The region spanning 105 to 162 (LLATDSKDFPQAAKQIKDGVTMAPAFRLSLKAKVSDNMSHLMVDFAQERRMLQALTFL) is the COS domain. In terms of domain architecture, Fibronectin type-III spans 164 to 268 (VPSAPVIDLT…EPVTLETPAF (105 aa)). The 210-residue stretch at 268–477 (FMFRLDASTS…VTTGLQVPSS (210 aa)) folds into the B30.2/SPRY domain. The segment at 301 to 336 (KAREKDGKGRTASPVNSPARGTPSPKRMPSGRGGRD) is disordered. Omega-N-methylarginine is present on residues Arg-310 and Arg-320.

In terms of assembly, oligomerization is required for binding to microtubules.

It localises to the cytoplasm. It is found in the cytoskeleton. Its subcellular location is the microtubule organizing center. The protein resides in the centrosome. The protein localises to the nucleus. It localises to the cleavage furrow. Functionally, may be involved in microtubule organization and stabilization. This chain is Fibronectin type III and SPRY domain-containing protein 1 (FSD1), found in Bos taurus (Bovine).